A 450-amino-acid chain; its full sequence is Tubulin beta-2 chain (450 aa).

The GTP site is built by Gln-11, Glu-69, Ser-138, Gly-142, Thr-143, Gly-144, Asn-204, and Asn-226. Glu-69 serves as a coordination point for Mg(2+). Residues 428-450 (ATAEDDVDGYAEGEAGETYESEQ) form a disordered region. Acidic residues predominate over residues 429–450 (TAEDDVDGYAEGEAGETYESEQ).

Belongs to the tubulin family. As to quaternary structure, dimer of alpha and beta chains. A typical microtubule is a hollow water-filled tube with an outer diameter of 25 nm and an inner diameter of 15 nm. Alpha-beta heterodimers associate head-to-tail to form protofilaments running lengthwise along the microtubule wall with the beta-tubulin subunit facing the microtubule plus end conferring a structural polarity. Microtubules usually have 13 protofilaments but different protofilament numbers can be found in some organisms and specialized cells. Mg(2+) is required as a cofactor. In terms of processing, cleaved by caspase ced-3 in vitro.

It localises to the cytoplasm. The protein resides in the cytoskeleton. Its function is as follows. Tubulin is the major constituent of microtubules, a cylinder consisting of laterally associated linear protofilaments composed of alpha- and beta-tubulin heterodimers. Microtubules grow by the addition of GTP-tubulin dimers to the microtubule end, where a stabilizing cap forms. Below the cap, tubulin dimers are in GDP-bound state, owing to GTPase activity of alpha-tubulin. Required for the normal dynamic behavior of the non-centrosomal microtubules in the epidermal syncytium. Involved in the redistribution of microtubule end-binding protein EB1/ebp-2 caused by wounding. Required to modulate expression in the epidermis of antimicrobial peptides, such as nlp-29, after wounding, or fungal infection. In Caenorhabditis elegans, this protein is Tubulin beta-2 chain (tbb-2).